Here is a 161-residue protein sequence, read N- to C-terminus: tRNA-specific adenosine deaminase (161 aa).

Residues 2–120 (TQDELYMKEA…GTLMNLLQEE (119 aa)) enclose the CMP/dCMP-type deaminase domain. Residue His-53 coordinates Zn(2+). Glu-55 serves as the catalytic Proton donor. Zn(2+) is bound by residues Cys-83 and Cys-86.

This sequence belongs to the cytidine and deoxycytidylate deaminase family. As to quaternary structure, homodimer. It depends on Zn(2+) as a cofactor.

It catalyses the reaction adenosine(34) in tRNA + H2O + H(+) = inosine(34) in tRNA + NH4(+). Its function is as follows. Catalyzes the deamination of adenosine to inosine at the wobble position 34 of tRNA(Arg2). This chain is tRNA-specific adenosine deaminase, found in Bacillus subtilis (strain 168).